The primary structure comprises 406 residues: Interactor protein for cytohesin exchange factors 1 (406 aa).

The region spanning 13–112 (HADCQGWLYK…WLNKLGFAVT (100 aa)) is the PH domain. Disordered stretches follow at residues 118 to 173 (TKDE…FSSL), 228 to 285 (CRVS…EDDE), and 383 to 406 (PQDP…ENSL). Residues 123–134 (CYSESEQEDPET) are compositionally biased toward acidic residues. Over residues 144 to 160 (ASATSSPVAARRASSSS) the composition is skewed to low complexity. Polar residues predominate over residues 228–239 (CRVSENSSTTPE). Positions 243–259 (LNSLSSDDTSSLNNSQD) are enriched in low complexity. Residues 272–285 (MTDRDEIKSSEDDE) are compositionally biased toward basic and acidic residues. Residues 285 to 406 (EMEKLYKSLE…TSSDCVENSL (122 aa)) are necessary for interaction with PSCD2 and to translocate to the plasma membrane. The span at 392–406 (EIMNPTSSDCVENSL) shows a compositional bias: polar residues.

In terms of assembly, interacts with guanine-nucleotide exchange factors PSCD1, PSCD2, PSCD3 and PSCD4. As to expression, expressed in brain, spleen, lung, testis and kidney.

Its subcellular location is the cytoplasm. The protein resides in the cell membrane. Its function is as follows. Enhances the promotion of guanine-nucleotide exchange by PSCD2 on ARF6 in a concentration-dependent manner. This Rattus norvegicus (Rat) protein is Interactor protein for cytohesin exchange factors 1 (Ipcef1).